The sequence spans 219 residues: Tetratricopeptide repeat protein 9A (219 aa).

The segment at 1–49 (MERKGLAARSSGNPSPPALGEGPRPVPPPCVPSGGGAPERGQAGTAAEP) is disordered. A TPR 1 repeat occupies 56-89 (AHEFKSQGAQCYKDKKFREAIGKYHRALLELKGL). The interval 94 to 115 (EERDARPASSAGVPKSSRLSEE) is disordered. Ser-102 carries the phosphoserine modification. TPR repeat units follow at residues 125–160 (IDCY…EGEN) and 161–194 (FKAL…QPTD).

Belongs to the TTC9 family.

This chain is Tetratricopeptide repeat protein 9A (Ttc9), found in Mus musculus (Mouse).